The chain runs to 274 residues: Thiamine kinase (274 aa).

This sequence belongs to the thiamine kinase family.

It carries out the reaction thiamine + ATP = thiamine phosphate + ADP + H(+). It functions in the pathway cofactor biosynthesis; thiamine diphosphate biosynthesis; thiamine phosphate from thiamine: step 1/1. Its function is as follows. Catalyzes the ATP-dependent phosphorylation of thiamine to thiamine phosphate. Is involved in thiamine salvage. The chain is Thiamine kinase from Escherichia coli (strain SMS-3-5 / SECEC).